The primary structure comprises 306 residues: Ribonuclease Z (306 aa).

Residues H63, H65, D67, H68, H141, D211, and H269 each contribute to the Zn(2+) site. Catalysis depends on D67, which acts as the Proton acceptor.

Belongs to the RNase Z family. As to quaternary structure, homodimer. It depends on Zn(2+) as a cofactor.

The catalysed reaction is Endonucleolytic cleavage of RNA, removing extra 3' nucleotides from tRNA precursor, generating 3' termini of tRNAs. A 3'-hydroxy group is left at the tRNA terminus and a 5'-phosphoryl group is left at the trailer molecule.. In terms of biological role, zinc phosphodiesterase, which displays some tRNA 3'-processing endonuclease activity. Probably involved in tRNA maturation, by removing a 3'-trailer from precursor tRNA. The protein is Ribonuclease Z of Staphylococcus aureus (strain bovine RF122 / ET3-1).